A 194-amino-acid chain; its full sequence is MEDGLLEIMTKDGGDMPAPLEVSTVPAVGDVISGEYNGGMKELMEHLKAQLQALFEDVRAMRGALDEQASHIQVLSDDVCANQRAIVSMCQIMTTAPRQGGLGVVGGKGSFQSDPQEPETPSPGIGDSGLLGRDPEDEEEEEEEKEMPSPATPSSHCERPESPCAGLLGGDGPLVEPLDMPDITLLQLEGEASL.

A coiled-coil region spans residues 39-68; sequence GMKELMEHLKAQLQALFEDVRAMRGALDEQ. Residues 101–176 form a disordered region; that stretch reads GLGVVGGKGS…LLGGDGPLVE (76 aa). Residues 135-145 are compositionally biased toward acidic residues; the sequence is PEDEEEEEEEK.

This Homo sapiens (Human) protein is Coiled-coil domain-containing protein 184 (CCDC184).